The chain runs to 216 residues: GTP cyclohydrolase 1 (216 aa).

Zn(2+) is bound by residues cysteine 108, histidine 111, and cysteine 179.

It belongs to the GTP cyclohydrolase I family. In terms of assembly, toroid-shaped homodecamer, composed of two pentamers of five dimers.

It catalyses the reaction GTP + H2O = 7,8-dihydroneopterin 3'-triphosphate + formate + H(+). It participates in cofactor biosynthesis; 7,8-dihydroneopterin triphosphate biosynthesis; 7,8-dihydroneopterin triphosphate from GTP: step 1/1. The protein is GTP cyclohydrolase 1 of Shewanella sp. (strain ANA-3).